Consider the following 432-residue polypeptide: Glutamyl-tRNA reductase (432 aa).

Residues 49-52 (TCNR), Ser-101, 106-108 (EPQ), and Gln-112 each bind substrate. Catalysis depends on Cys-50, which acts as the Nucleophile. NADP(+) is bound at residue 181-186 (GAGETI). The disordered stretch occupies residues 408-432 (PEKPGYRHPPVATPIVRTDDANPAP).

It belongs to the glutamyl-tRNA reductase family. In terms of assembly, homodimer.

The catalysed reaction is (S)-4-amino-5-oxopentanoate + tRNA(Glu) + NADP(+) = L-glutamyl-tRNA(Glu) + NADPH + H(+). Its pathway is porphyrin-containing compound metabolism; protoporphyrin-IX biosynthesis; 5-aminolevulinate from L-glutamyl-tRNA(Glu): step 1/2. Functionally, catalyzes the NADPH-dependent reduction of glutamyl-tRNA(Glu) to glutamate 1-semialdehyde (GSA). In Xanthomonas campestris pv. campestris (strain 8004), this protein is Glutamyl-tRNA reductase.